Reading from the N-terminus, the 283-residue chain is RNase adapter protein RapZ (283 aa).

An ATP-binding site is contributed by 8–15 (GRSGSGKS). 56–59 (DVRN) contributes to the GTP binding site. The RNA-binding stretch occupies residues 266–283 (RSRGKNVQSRHRTLEKRK).

It belongs to the RapZ-like family. RapZ subfamily. Homotrimer.

In terms of biological role, modulates the synthesis of GlmS, by affecting the processing and stability of the regulatory small RNA GlmZ. When glucosamine-6-phosphate (GlcN6P) concentrations are high in the cell, RapZ binds GlmZ and targets it to cleavage by RNase E. Consequently, GlmZ is inactivated and unable to activate GlmS synthesis. Under low GlcN6P concentrations, RapZ is sequestered and inactivated by an other regulatory small RNA, GlmY, preventing GlmZ degradation and leading to synthesis of GlmS. The chain is RNase adapter protein RapZ from Photorhabdus laumondii subsp. laumondii (strain DSM 15139 / CIP 105565 / TT01) (Photorhabdus luminescens subsp. laumondii).